A 317-amino-acid polypeptide reads, in one-letter code: MLSCLLRNDKRLEVFFSSLDMKKSYLLALSGGSDSLFLLYLLKSRGVSFIAVHVDYGWRESSYREAEELELRCQAEGVPIIVDHVPPEYRTSRDQENAARRYRYALFHKVCQKKNLSGIFLAHHANDQAETVLKRVLEGAHLSNLKGMRGEVYYEGIPILRPLLHIPKIVLSRTLDAANIHYVHDITNTDERYLRARMRNKIFPWLEEIFGKNITQPLLTLAQDSEELSCYMKQQAQPFLEKIRKENTTLSLEIPKTLIEQVFLTKWVCKEFFYSAGIVASRHFLQTVYDHLNRGLPAQMRLRNKRVIVKAGVVMIE.

Residue 30 to 35 participates in ATP binding; sequence SGGSDS.

It belongs to the tRNA(Ile)-lysidine synthase family.

The protein resides in the cytoplasm. It catalyses the reaction cytidine(34) in tRNA(Ile2) + L-lysine + ATP = lysidine(34) in tRNA(Ile2) + AMP + diphosphate + H(+). In terms of biological role, ligates lysine onto the cytidine present at position 34 of the AUA codon-specific tRNA(Ile) that contains the anticodon CAU, in an ATP-dependent manner. Cytidine is converted to lysidine, thus changing the amino acid specificity of the tRNA from methionine to isoleucine. In Chlamydia felis (strain Fe/C-56) (Chlamydophila felis), this protein is tRNA(Ile)-lysidine synthase.